Here is a 486-residue protein sequence, read N- to C-terminus: Malonate-semialdehyde dehydrogenase 1 (486 aa).

F154, K178, E181, R182, and S231 together coordinate NAD(+). The Nucleophile role is filled by C286. E386 contributes to the NAD(+) binding site.

Belongs to the aldehyde dehydrogenase family. IolA subfamily. In terms of assembly, homotetramer.

The enzyme catalyses 3-oxopropanoate + NAD(+) + CoA + H2O = hydrogencarbonate + acetyl-CoA + NADH + H(+). The catalysed reaction is 2-methyl-3-oxopropanoate + NAD(+) + CoA + H2O = propanoyl-CoA + hydrogencarbonate + NADH + H(+). Its pathway is polyol metabolism; myo-inositol degradation into acetyl-CoA; acetyl-CoA from myo-inositol: step 7/7. Catalyzes the oxidation of malonate semialdehyde (MSA) and methylmalonate semialdehyde (MMSA) into acetyl-CoA and propanoyl-CoA, respectively. Is involved in a myo-inositol catabolic pathway. Bicarbonate, and not CO2, is the end-product of the enzymatic reaction. In Oceanobacillus iheyensis (strain DSM 14371 / CIP 107618 / JCM 11309 / KCTC 3954 / HTE831), this protein is Malonate-semialdehyde dehydrogenase 1.